The primary structure comprises 487 residues: Galactose-1-phosphate uridylyltransferase (487 aa).

This sequence belongs to the galactose-1-phosphate uridylyltransferase type 2 family.

It localises to the cytoplasm. It catalyses the reaction alpha-D-galactose 1-phosphate + UDP-alpha-D-glucose = alpha-D-glucose 1-phosphate + UDP-alpha-D-galactose. Its pathway is carbohydrate metabolism; galactose metabolism. In Lactiplantibacillus plantarum (strain ATCC BAA-793 / NCIMB 8826 / WCFS1) (Lactobacillus plantarum), this protein is Galactose-1-phosphate uridylyltransferase.